The following is a 306-amino-acid chain: Pantothenate kinase (306 aa).

Residue 91-98 (GSVAVGKS) coordinates ATP.

The protein belongs to the prokaryotic pantothenate kinase family.

It localises to the cytoplasm. The catalysed reaction is (R)-pantothenate + ATP = (R)-4'-phosphopantothenate + ADP + H(+). It participates in cofactor biosynthesis; coenzyme A biosynthesis; CoA from (R)-pantothenate: step 1/5. The sequence is that of Pantothenate kinase from Streptococcus equi subsp. equi (strain 4047).